A 942-amino-acid chain; its full sequence is Protein NLP1 (942 aa).

Pro residues predominate over residues 1–11 (MEQKPSPPPPP). Disordered regions lie at residues 1–32 (MEQK…GDIA), 77–106 (TTPA…VSPA), 594–620 (VKEN…TKTE), 723–753 (FQLE…PSCS), and 759–778 (SLGC…APQL). The segment covering 21 to 32 (MGCGMGGTGDIA) has biased composition (gly residues). Positions 597–609 (NTCSSDPSNSNSD) are enriched in polar residues. The 82-residue stretch at 609 to 690 (DKAVEKRRTK…IDSVHGPEGT (82 aa)) folds into the RWP-RK domain. Over residues 743–753 (SGSNSISPSCS) the composition is skewed to low complexity. The segment covering 765 to 774 (VPKTQQQHGS) has biased composition (polar residues). Residues 844-927 (SLKIKAIYGE…QTVRILVNPS (84 aa)) form the PB1 domain.

The protein resides in the nucleus. In terms of biological role, probable transcription factor. This is Protein NLP1 (NLP1) from Oryza sativa subsp. japonica (Rice).